Consider the following 122-residue polypeptide: Large ribosomal subunit protein uL14 (122 aa).

It belongs to the universal ribosomal protein uL14 family. Part of the 50S ribosomal subunit. Forms a cluster with proteins L3 and L19. In the 70S ribosome, L14 and L19 interact and together make contacts with the 16S rRNA in bridges B5 and B8.

Functionally, binds to 23S rRNA. Forms part of two intersubunit bridges in the 70S ribosome. This is Large ribosomal subunit protein uL14 from Streptococcus gordonii (strain Challis / ATCC 35105 / BCRC 15272 / CH1 / DL1 / V288).